Here is a 271-residue protein sequence, read N- to C-terminus: Putative pyruvate, phosphate dikinase regulatory protein (271 aa).

Residue 147 to 154 (GLSRTSKT) participates in ADP binding.

It belongs to the pyruvate, phosphate/water dikinase regulatory protein family. PDRP subfamily.

The catalysed reaction is N(tele)-phospho-L-histidyl/L-threonyl-[pyruvate, phosphate dikinase] + ADP = N(tele)-phospho-L-histidyl/O-phospho-L-threonyl-[pyruvate, phosphate dikinase] + AMP + H(+). The enzyme catalyses N(tele)-phospho-L-histidyl/O-phospho-L-threonyl-[pyruvate, phosphate dikinase] + phosphate + H(+) = N(tele)-phospho-L-histidyl/L-threonyl-[pyruvate, phosphate dikinase] + diphosphate. Functionally, bifunctional serine/threonine kinase and phosphorylase involved in the regulation of the pyruvate, phosphate dikinase (PPDK) by catalyzing its phosphorylation/dephosphorylation. The sequence is that of Putative pyruvate, phosphate dikinase regulatory protein from Clostridium tetani (strain Massachusetts / E88).